We begin with the raw amino-acid sequence, 119 residues long: Ribosome-binding factor A (119 aa).

Belongs to the RbfA family. As to quaternary structure, monomer. Binds 30S ribosomal subunits, but not 50S ribosomal subunits or 70S ribosomes.

It is found in the cytoplasm. Its function is as follows. One of several proteins that assist in the late maturation steps of the functional core of the 30S ribosomal subunit. Associates with free 30S ribosomal subunits (but not with 30S subunits that are part of 70S ribosomes or polysomes). Required for efficient processing of 16S rRNA. May interact with the 5'-terminal helix region of 16S rRNA. The sequence is that of Ribosome-binding factor A from Lactococcus lactis subsp. cremoris (strain SK11).